The chain runs to 150 residues: 3-hydroxyacyl-[acyl-carrier-protein] dehydratase FabZ (150 aa).

Histidine 54 is an active-site residue.

It belongs to the thioester dehydratase family. FabZ subfamily.

It is found in the cytoplasm. It carries out the reaction a (3R)-hydroxyacyl-[ACP] = a (2E)-enoyl-[ACP] + H2O. Involved in unsaturated fatty acids biosynthesis. Catalyzes the dehydration of short chain beta-hydroxyacyl-ACPs and long chain saturated and unsaturated beta-hydroxyacyl-ACPs. In Pseudoalteromonas translucida (strain TAC 125), this protein is 3-hydroxyacyl-[acyl-carrier-protein] dehydratase FabZ.